We begin with the raw amino-acid sequence, 280 residues long: uncharacterized protein (280 aa).

Residues 1–10 show a composition bias toward basic residues; it reads MSSSIKKLKK. The disordered stretch occupies residues 1–45; that stretch reads MSSSIKKLKKDTKDTDKTPSKKIYQETHNSEDSEDSEDSDNENNT. Over residues 11–31 the composition is skewed to basic and acidic residues; sequence DTKDTDKTPSKKIYQETHNSE. Residues 32-41 show a composition bias toward acidic residues; the sequence is DSEDSEDSDN.

This is an uncharacterized protein from Acanthamoeba polyphaga mimivirus (APMV).